The sequence spans 391 residues: 8-amino-7-oxononanoate synthase (391 aa).

R19 is a binding site for substrate. 106 to 107 (GY) serves as a coordination point for pyridoxal 5'-phosphate. H131 lines the substrate pocket. Positions 178, 206, and 234 each coordinate pyridoxal 5'-phosphate. K237 is modified (N6-(pyridoxal phosphate)lysine). T353 lines the substrate pocket.

Belongs to the class-II pyridoxal-phosphate-dependent aminotransferase family. BioF subfamily. In terms of assembly, homodimer. Pyridoxal 5'-phosphate is required as a cofactor.

It catalyses the reaction 6-carboxyhexanoyl-[ACP] + L-alanine + H(+) = (8S)-8-amino-7-oxononanoate + holo-[ACP] + CO2. The protein operates within cofactor biosynthesis; biotin biosynthesis. Catalyzes the decarboxylative condensation of pimeloyl-[acyl-carrier protein] and L-alanine to produce 8-amino-7-oxononanoate (AON), [acyl-carrier protein], and carbon dioxide. The sequence is that of 8-amino-7-oxononanoate synthase from Geobacter metallireducens (strain ATCC 53774 / DSM 7210 / GS-15).